We begin with the raw amino-acid sequence, 697 residues long: Exocyst complex component 7 (697 aa).

The SEC8 and ARHQ binding stretch occupies residues 1–384; sequence MIPPQEASAR…FSTVLTVFPI (384 aa). Coiled-coil stretches lie at residues 5 to 42 and 63 to 85; these read QEASARRREIEDKLKQEEETLSFIRDSLEKSDQLTRNM and VHKQTENLQRLQENVEKTLSCLD. Ser-133 carries the post-translational modification Phosphoserine. The segment at 238 to 270 is disordered; that stretch reads FRKSSSSSGVPYSPAIPNKRKDTPTKKPIKRPG.

This sequence belongs to the EXO70 family. In terms of assembly, the exocyst complex is composed of EXOC1, EXOC2, EXOC3, EXOC4, EXOC5, EXOC6, EXOC7 and EXOC8. Interacts with RAB11FIP3. Interacts with ARHQ in a GTP-dependent manner.

The protein localises to the cytoplasm. It localises to the cytosol. The protein resides in the cell membrane. It is found in the midbody. Its subcellular location is the midbody ring. Functionally, component of the exocyst complex involved in the docking of exocytic vesicles with fusion sites on the plasma membrane. In adipocytes, plays a crucial role in targeting SLC2A4 vesicle to the plasma membrane in response to insulin, perhaps directing the vesicle to the precise site of fusion. It is required for neuron survival and plays an essential role in cortical development. The polypeptide is Exocyst complex component 7 (Exoc7) (Mus musculus (Mouse)).